Reading from the N-terminus, the 457-residue chain is C4-dicarboxylate transport protein (457 aa).

Transmembrane regions (helical) follow at residues 22–42 (FQVV…PAFA), 55–75 (LVKM…IAGM), 90–110 (VYFL…AHVV), 138–158 (LTLV…AFTG), 168–188 (GPNI…LALV), 209–229 (LVHI…AFTI), 242–262 (WLVG…LGVV), 335–357 (LFIA…LAVA), and 376–396 (AATL…ILGV).

Belongs to the dicarboxylate/amino acid:cation symporter (DAACS) (TC 2.A.23) family.

The protein resides in the cell inner membrane. In terms of biological role, responsible for the transport of dicarboxylates such as succinate, fumarate, and malate from the periplasm across the membrane. This is C4-dicarboxylate transport protein from Xanthomonas oryzae pv. oryzae (strain MAFF 311018).